A 309-amino-acid chain; its full sequence is Ribosomal RNA small subunit methyltransferase H (309 aa).

S-adenosyl-L-methionine-binding positions include 32–34 (AGH), aspartate 52, phenylalanine 79, aspartate 100, and glutamine 107.

It belongs to the methyltransferase superfamily. RsmH family.

The protein resides in the cytoplasm. The enzyme catalyses cytidine(1402) in 16S rRNA + S-adenosyl-L-methionine = N(4)-methylcytidine(1402) in 16S rRNA + S-adenosyl-L-homocysteine + H(+). Its function is as follows. Specifically methylates the N4 position of cytidine in position 1402 (C1402) of 16S rRNA. The sequence is that of Ribosomal RNA small subunit methyltransferase H from Mycoplasma capricolum subsp. capricolum (strain California kid / ATCC 27343 / NCTC 10154).